Consider the following 397-residue polypeptide: Phosphoglycerate kinase (397 aa).

Substrate contacts are provided by residues 26-28, arginine 42, 65-68, arginine 119, and arginine 152; these read DLN and HLGR. ATP-binding positions include lysine 203, glutamate 325, and 351 to 354; that span reads GGDT.

It belongs to the phosphoglycerate kinase family. Monomer.

The protein resides in the cytoplasm. It carries out the reaction (2R)-3-phosphoglycerate + ATP = (2R)-3-phospho-glyceroyl phosphate + ADP. The protein operates within carbohydrate degradation; glycolysis; pyruvate from D-glyceraldehyde 3-phosphate: step 2/5. The protein is Phosphoglycerate kinase of Bordetella pertussis (strain Tohama I / ATCC BAA-589 / NCTC 13251).